An 86-amino-acid chain; its full sequence is Photosystem I reaction center subunit PsaK (86 aa).

2 helical membrane-spanning segments follow: residues 14-34 (LQWSPTVGLIIIIANIIAIAF) and 57-77 (FGLPALLATTAFGHILGVGAV).

The protein belongs to the PsaG/PsaK family.

The protein resides in the cellular thylakoid membrane. The sequence is that of Photosystem I reaction center subunit PsaK from Nostoc punctiforme (strain ATCC 29133 / PCC 73102).